The chain runs to 248 residues: 5'-nucleotidase SurE (248 aa).

Residues aspartate 8, aspartate 9, serine 39, and asparagine 91 each coordinate a divalent metal cation.

Belongs to the SurE nucleotidase family. The cofactor is a divalent metal cation.

The protein localises to the cytoplasm. The enzyme catalyses a ribonucleoside 5'-phosphate + H2O = a ribonucleoside + phosphate. Its function is as follows. Nucleotidase that shows phosphatase activity on nucleoside 5'-monophosphates. This is 5'-nucleotidase SurE from Neisseria meningitidis serogroup A / serotype 4A (strain DSM 15465 / Z2491).